The following is a 307-amino-acid chain: Small ribosomal subunit biogenesis GTPase RsgA (307 aa).

The segment at 1–20 is disordered; that stretch reads MPSEHPFSDGISTPNPKETM. Residues 10-20 show a composition bias toward polar residues; sequence GISTPNPKETM. Positions 85-242 constitute a CP-type G domain; sequence RQDAWKTKLI…LIDSPGLQEF (158 aa). Residues 135-138 and 184-192 contribute to the GTP site; these read NKAD and GQSGMGKST. 4 residues coordinate Zn(2+): Cys-266, Cys-271, His-273, and Cys-279.

It belongs to the TRAFAC class YlqF/YawG GTPase family. RsgA subfamily. In terms of assembly, monomer. Associates with 30S ribosomal subunit, binds 16S rRNA. Zn(2+) is required as a cofactor.

It localises to the cytoplasm. In terms of biological role, one of several proteins that assist in the late maturation steps of the functional core of the 30S ribosomal subunit. Helps release RbfA from mature subunits. May play a role in the assembly of ribosomal proteins into the subunit. Circularly permuted GTPase that catalyzes slow GTP hydrolysis, GTPase activity is stimulated by the 30S ribosomal subunit. In Neisseria meningitidis serogroup C / serotype 2a (strain ATCC 700532 / DSM 15464 / FAM18), this protein is Small ribosomal subunit biogenesis GTPase RsgA.